A 332-amino-acid polypeptide reads, in one-letter code: PTS-dependent dihydroxyacetone kinase, dihydroxyacetone-binding subunit DhaK (332 aa).

Positions 9–331 constitute a DhaK domain; sequence QPQDVVSEML…LNEDVKTISW (323 aa). Dihydroxyacetone contacts are provided by residues 55-58, K106, and D111; that span reads GSGH. H58 functions as the Proton acceptor in the catalytic mechanism. The Tele-hemiaminal-histidine intermediate role is filled by H220.

As to quaternary structure, homodimer. The dihydroxyacetone kinase complex is composed of a homodimer of DhaM, a homodimer of DhaK and the subunit DhaL.

It carries out the reaction dihydroxyacetone + phosphoenolpyruvate = dihydroxyacetone phosphate + pyruvate. It functions in the pathway polyol metabolism; glycerol degradation. Its function is as follows. Dihydroxyacetone binding subunit of the dihydroxyacetone kinase, which is responsible the phosphoenolpyruvate (PEP)-dependent phosphorylation of dihydroxyacetone via a phosphoryl group transfer from DhaL-ATP. The chain is PTS-dependent dihydroxyacetone kinase, dihydroxyacetone-binding subunit DhaK from Lactococcus lactis subsp. lactis (strain IL1403) (Streptococcus lactis).